Reading from the N-terminus, the 514-residue chain is Lysine--tRNA ligase (514 aa).

2 residues coordinate Mg(2+): E424 and E431.

The protein belongs to the class-II aminoacyl-tRNA synthetase family. In terms of assembly, homodimer. Mg(2+) is required as a cofactor.

The protein resides in the cytoplasm. It carries out the reaction tRNA(Lys) + L-lysine + ATP = L-lysyl-tRNA(Lys) + AMP + diphosphate. The polypeptide is Lysine--tRNA ligase (Cupriavidus necator (strain ATCC 17699 / DSM 428 / KCTC 22496 / NCIMB 10442 / H16 / Stanier 337) (Ralstonia eutropha)).